Consider the following 209-residue polypeptide: Chromophore lyase CpcT/CpeT 1 (209 aa).

This sequence belongs to the CpcT/CpeT biliprotein lyase family.

Covalently attaches a chromophore to Cys residue(s) of phycobiliproteins. This is Chromophore lyase CpcT/CpeT 1 from Trichodesmium erythraeum (strain IMS101).